The following is a 414-amino-acid chain: Histidine--tRNA ligase (414 aa).

It belongs to the class-II aminoacyl-tRNA synthetase family. Homodimer.

It localises to the cytoplasm. It carries out the reaction tRNA(His) + L-histidine + ATP = L-histidyl-tRNA(His) + AMP + diphosphate + H(+). The protein is Histidine--tRNA ligase of Mycoplasma capricolum subsp. capricolum (strain California kid / ATCC 27343 / NCTC 10154).